A 2115-amino-acid chain; its full sequence is Non-reducing polyketide synthase PFUR17_0229 (2115 aa).

The segment at 8-246 is N-terminal acylcarrier protein transacylase (SAT) domain (SAT); sequence VLFGDQTVDP…ISLPITAAFH (239 aa). One can recognise a Ketosynthase family 3 (KS3) domain in the interval 367-796; sequence SGDIAIVGVA…GGNTSLVLED (430 aa). Catalysis depends on for beta-ketoacyl synthase activity residues C539, H674, and H713. A malonyl-CoA:ACP transacylase (MAT) domain region spans residues 895–1218; that stretch reads IFAFTGQGAQ…SISNAYNSGA (324 aa). The segment at 1279–1592 is product template (PT) domain; the sequence is TTCLQKVESE…KRNILQSLLS (314 aa). Residues 1282–1413 are N-terminal hotdog fold; sequence LQKVESETFT…CTVMYGDGQQ (132 aa). Residues 1282–1588 enclose the PKS/mFAS DH domain; it reads LQKVESETFT…FQKMKRNILQ (307 aa). H1315 functions as the Proton acceptor; for dehydratase activity in the catalytic mechanism. The interval 1441–1588 is C-terminal hotdog fold; that stretch reads VHRLLKEMIY…FQKMKRNILQ (148 aa). Catalysis depends on D1501, which acts as the Proton donor; for dehydratase activity. The tract at residues 1594–1613 is disordered; sequence GHEETPPARPVPSKRTVQGS. The Carrier 1 domain occupies 1626-1703; that stretch reads KAASGGFSNI…QLRNFFLDKV (78 aa). O-(pantetheine 4'-phosphoryl)serine is present on S1663. The disordered stretch occupies residues 1710 to 1742; the sequence is FDDEESEMSSSTAGSTPGSSTSHGNQNTTVTTP. Residues 1718–1733 show a composition bias toward low complexity; that stretch reads SSSTAGSTPGSSTSHG. A Carrier 2 domain is found at 1742–1819; sequence PAEPDVVAIL…DVQKALGVPS (78 aa). The residue at position 1779 (S1779) is an O-(pantetheine 4'-phosphoryl)serine. Residues 1861-2097 are thioesterase (TE) domain; sequence LFLLPDGAGS…VVGGNHFSIM (237 aa).

Requires pantetheine 4'-phosphate as cofactor.

It carries out the reaction 6 malonyl-CoA + 2 acetyl-CoA + 5 H(+) = o-orsellinate depside + 6 CO2 + 8 CoA + H2O. Its function is as follows. Non-reducing polyketide synthase; part of a gene cluster that mediates the biosynthesis of a yet unidentified depside/depsidone compound. The first step in the pathway is performed by the PKS PFUR17_0229 that condenses 2 acetyl-CoA starter units with 6 malonyl-CoA units to produce lecanoric acid (LA), also known as orsellinate depside. The biosynthesis occurs via the formation of 2 orsellinate intermediates fused together by the C-terminal thioesterase (TE) domain that finally releases lecanoric acid. In addition to the PKS gene, the PFUR17 gene cluster contains closely linked genes encoding a cytochrome P-450 and a laccase (phenol oxidase), directly upstream and downstream respectively, so it is likely that lecanoric acid is an intermediate in a longer biosynthetic pathway. This Pseudevernia furfuracea (Tree moss) protein is Non-reducing polyketide synthase PFUR17_0229.